Here is an 82-residue protein sequence, read N- to C-terminus: U1-plectoxin-Pt1a (82 aa).

An N-terminal signal peptide occupies residues 1-20 (MKHLIFSSALVCALVVCTFA). A propeptide spanning residues 21-33 (EEQVNVPFLPDER) is cleaved from the precursor. Disulfide bonds link cysteine 37–cysteine 51, cysteine 44–cysteine 57, cysteine 50–cysteine 68, cysteine 54–cysteine 77, and cysteine 59–cysteine 66. The O-palmitoyl serine moiety is linked to residue serine 79. The propeptide occupies 80–82 (RRR).

It belongs to the neurotoxin 02 (plectoxin) family. 02 (plectoxin) subfamily. In terms of processing, plectoxin-5 presumably undergoes post-translational modification to give rise to plectoxin-6. As to expression, expressed by the venom gland.

It is found in the secreted. Functionally, potent toxin that may paralyze and/or kill insect pests such as H.virescens (lepidoptera), S.exigua (beet armyworm) and M.sexta (tobacco hornworm). This is U1-plectoxin-Pt1a from Plectreurys tristis (Spider).